The primary structure comprises 438 residues: UDP-N-acetylglucosamine 1-carboxyvinyltransferase (438 aa).

Phosphoenolpyruvate is bound at residue 35–36 (KN). A UDP-N-acetyl-alpha-D-glucosamine-binding site is contributed by R105. The active-site Proton donor is C129. A 2-(S-cysteinyl)pyruvic acid O-phosphothioketal modification is found at C129. Residues 134–138 (RPVDL), D321, and V343 contribute to the UDP-N-acetyl-alpha-D-glucosamine site.

Belongs to the EPSP synthase family. MurA subfamily.

Its subcellular location is the cytoplasm. The enzyme catalyses phosphoenolpyruvate + UDP-N-acetyl-alpha-D-glucosamine = UDP-N-acetyl-3-O-(1-carboxyvinyl)-alpha-D-glucosamine + phosphate. Its pathway is cell wall biogenesis; peptidoglycan biosynthesis. Its function is as follows. Cell wall formation. Adds enolpyruvyl to UDP-N-acetylglucosamine. The chain is UDP-N-acetylglucosamine 1-carboxyvinyltransferase from Synechocystis sp. (strain ATCC 27184 / PCC 6803 / Kazusa).